Consider the following 253-residue polypeptide: Tryptophan synthase alpha chain (253 aa).

Residues E46 and D57 each act as proton acceptor in the active site.

The protein belongs to the TrpA family. Tetramer of two alpha and two beta chains.

It catalyses the reaction (1S,2R)-1-C-(indol-3-yl)glycerol 3-phosphate + L-serine = D-glyceraldehyde 3-phosphate + L-tryptophan + H2O. The protein operates within amino-acid biosynthesis; L-tryptophan biosynthesis; L-tryptophan from chorismate: step 5/5. Its function is as follows. The alpha subunit is responsible for the aldol cleavage of indoleglycerol phosphate to indole and glyceraldehyde 3-phosphate. The polypeptide is Tryptophan synthase alpha chain (Dictyoglomus thermophilum (strain ATCC 35947 / DSM 3960 / H-6-12)).